The chain runs to 233 residues: MLIVLSLGGSILAKNLDSDRFLKYANVLRDISKKHTLLVITGGGEAARNYIGAARAMGADEVTCDYIGIDITRLNARLLIAALGPDGYPEIPTNYLEASKAINSGKVVVMGGVTPGQTTDAVAAILAEYLRADLLTIATSIDGVYSSDPNCDPSAVKYDKISPEKLINIVMAIEMKAGSKSPVDPVAAKIIERCKLDALVMDARDPSLLGEILGEEVAKKSPVSCGTWITARK.

9 to 10 (GS) provides a ligand contact to ATP. Glycine 43 provides a ligand contact to UMP. The ATP site is built by glycine 44 and arginine 48. Residues aspartate 65 and 113-119 (VTPGQTT) contribute to the UMP site. Residues threonine 139, tyrosine 145, and aspartate 148 each coordinate ATP.

This sequence belongs to the UMP kinase family. In terms of assembly, homohexamer.

It localises to the cytoplasm. The catalysed reaction is UMP + ATP = UDP + ADP. The protein operates within pyrimidine metabolism; CTP biosynthesis via de novo pathway; UDP from UMP (UMPK route): step 1/1. Inhibited by UTP. Catalyzes the reversible phosphorylation of UMP to UDP. The sequence is that of Uridylate kinase from Methanosarcina acetivorans (strain ATCC 35395 / DSM 2834 / JCM 12185 / C2A).